The chain runs to 61 residues: Small ribosomal subunit protein uS14 (61 aa).

Zn(2+)-binding residues include Cys-24, Cys-27, Cys-40, and Cys-43.

The protein belongs to the universal ribosomal protein uS14 family. Zinc-binding uS14 subfamily. Part of the 30S ribosomal subunit. Contacts proteins S3 and S10. Zn(2+) serves as cofactor.

Functionally, binds 16S rRNA, required for the assembly of 30S particles and may also be responsible for determining the conformation of the 16S rRNA at the A site. The chain is Small ribosomal subunit protein uS14 from Aliarcobacter butzleri (strain RM4018) (Arcobacter butzleri).